Consider the following 327-residue polypeptide: o-succinylbenzoate synthase (327 aa).

The active-site Proton donor is the lysine 110. Mg(2+) is bound by residues aspartate 138, glutamate 165, and aspartate 188. Lysine 212 serves as the catalytic Proton acceptor.

Belongs to the mandelate racemase/muconate lactonizing enzyme family. MenC type 1 subfamily. It depends on a divalent metal cation as a cofactor.

The enzyme catalyses (1R,6R)-6-hydroxy-2-succinyl-cyclohexa-2,4-diene-1-carboxylate = 2-succinylbenzoate + H2O. The protein operates within quinol/quinone metabolism; 1,4-dihydroxy-2-naphthoate biosynthesis; 1,4-dihydroxy-2-naphthoate from chorismate: step 4/7. It functions in the pathway quinol/quinone metabolism; menaquinone biosynthesis. Functionally, converts 2-succinyl-6-hydroxy-2,4-cyclohexadiene-1-carboxylate (SHCHC) to 2-succinylbenzoate (OSB). The polypeptide is o-succinylbenzoate synthase (Mycobacterium marinum (strain ATCC BAA-535 / M)).